The sequence spans 142 residues: HTH-type transcriptional regulator MntR (142 aa).

The region spanning 1–63 (MPTPSMEDYI…YEKYRGLVLT (63 aa)) is the HTH dtxR-type domain. Positions 8, 11, 77, 99, 102, and 103 each coordinate Mn(2+).

The protein belongs to the DtxR/MntR family. As to quaternary structure, homodimer.

It is found in the cytoplasm. With respect to regulation, DNA binding is strongly activated by Mn(2+). Functionally, central regulator of manganese homeostasis. This chain is HTH-type transcriptional regulator MntR, found in Bacillus cytotoxicus (strain DSM 22905 / CIP 110041 / 391-98 / NVH 391-98).